A 367-amino-acid polypeptide reads, in one-letter code: MATGLIKAKEYDWKDSNLALFGSDTEKQVKKDSAATEPAWKGAGQKEGLKIWRIVNFKVTEWPQNQHGKFYNGDSYIILNTYKPDPKSNELAYDVHFWIGSQSSQDEYGTAAYKTVELDTFLDDKPVQHREVQGYESELFRNYFKQGLTILEGGAETGFHHVKPTEYKPRLLHFSGQKQQIYVHEVPLVKERLDHKDVFILDLGLTLYQWNGKESSKEEGFKAMQYLGLMRSERPKAEAETLEDESTPESHKFYTSLTGTDEPNLVKPLVKEENQLLKVSDAGGHLKTTEVKRGAVNSKDFSSNDVFILDTGDQCFVWVGKGRFAVGEAEWTRISHAHLMKTCHPLAPIHVIKEGQLCKAFNVAIAA.

The interval 1–185 (MATGLIKAKE…GQKQQIYVHE (185 aa)) is actin binding. Gelsolin-like repeat units follow at residues 56–141 (NFKV…ELFR) and 179–225 (QQIY…KAMQ). Residues 106-109 (DEYG) form an actin-actin interfilament contact point region. Residues 186–295 (VPLVKERLDH…LKTTEVKRGA (110 aa)) are actin binding, Actin-severing. A disordered region spans residues 235 to 257 (PKAEAETLEDESTPESHKFYTSL). Residues 287 to 322 (KTTEVKRGAVNSKDFSSNDVFILDTGDQCFVWVGKG) form a Gelsolin-like 3 repeat. The segment at 296–366 (VNSKDFSSND…LCKAFNVAIA (71 aa)) is actin-severing, Ca-sensitive.

This sequence belongs to the villin/gelsolin family. As to quaternary structure, interacts with actin monomers and filaments. Expressed in circular and longitudinal muscle, pseudohearts, pharynx and gizzard. Also expressed in male germ cells at the proximal pole of primary spermatocytes in 16 cell-stage morulae, and in the distal parts of the spermatocytes in 32 and 64 cell-stage morulae. In the spermatids of the 128 cell-stage morulae it is expressed at the proximal pole of the elongated nucleus and the distal pole near the base of the flagellae.

It is found in the cytoplasm. It localises to the cytoskeleton. In terms of biological role, calcium-regulated protein that binds to the plus (or barbed) ends of actin monomers or filaments, preventing monomer exchange (end-blocking or capping). Can promote the assembly of monomers into filaments (nucleation) as well as sever existing filaments. This chain is Gelsolin-like protein 1, found in Lumbricus terrestris (Common earthworm).